The chain runs to 433 residues: Steroid hormone receptor ERR2 (433 aa).

The interval 1–38 is disordered; that stretch reads MSSDDRHLGSSCGSFIKTEPSSPSSGIDALSHHSPSGS. Residues 28-38 are compositionally biased toward low complexity; the sequence is DALSHHSPSGS. Positions 93-211 are interaction with NANOG; sequence YMLNAIPKRL…SPPAKKPLTK (119 aa). The segment at residues 100-186 is a DNA-binding region (nuclear receptor); sequence KRLCLVCGDI…RVRGGRQKYK (87 aa). NR C4-type zinc fingers lie at residues 103-123 and 139-163; these read CLVCGDIASGYHYGVASCEAC and CPATNECEITKRRRKSCQACRFMKC. Residues 203 to 433 form an essential for ESRRB transcriptional activity and interaction with NCOA3 region; sequence PPAKKPLTKI…LFLEMLEAKV (231 aa). In terms of domain architecture, NR LBD spans 208-432; the sequence is PLTKIVSYLL…KLFLEMLEAK (225 aa).

The protein belongs to the nuclear hormone receptor family. NR3 subfamily. Binds DNA as a monomer. Interacts with NR0B1; represses ESRRB activity at the GATA6 promoter. Interacts with NANOG; reciprocally modulates their transcriptional activities and activates POU5F1 expression. Interacts with NCOA3; mediates the interaction between ESRRB and RNA polymerase II complexes and allows NCOA3 corecruitment to ESRRB, KLF4, NANOG, and SOX2 enhancer regions to trigger ESRRB-dependent gene activation involved in self-renewal and pluripotency. Interacts with KDM1A; co-occupes the core set of ESRRB targets including ELF5 and EOMES. Interacts with the multiprotein complex Integrator, at least composed of INTS1, INTS2, INTS3, INTS4, INTS5, INTS6, INTS7, INTS8, INTS9/RC74, INTS10, INTS11/CPSF3L and INTS12; ESRRB is probably not a core component of the integrator complex and associates to integrator via its interaction with INTS1 and INTS9; attracts the transcriptional machinery. Interacts with JARID2. Interacts with POU5F1; recruits ESRRB near the POU5F1-SOX2 element in the NANOG proximal promoter leading to activation of NANOG expression; the interaction is DNA independent. Interacts with NFE2L2; represses NFE2L2 transcriptional activity. Isoform 1 interacts with ESR1. In terms of processing, acetylated by PCAF/KAT2 (in vitro).

The protein resides in the nucleus. Its subcellular location is the cytoplasm. The protein localises to the chromosome. Its function is as follows. Transcription factor that binds a canonical ESRRB recognition (ERRE) sequence 5'TCAAGGTCA-3' localized on promoter and enhancer of targets genes regulating their expression or their transcription activity. Plays a role, in a LIF-independent manner, in maintainance of self-renewal and pluripotency of embryonic and trophoblast stem cells through different signaling pathways including FGF signaling pathway and Wnt signaling pathways. Involved in morula development (2-16 cells embryos) by acting as a regulator at the 8-cell stage. Upon FGF signaling pathway activation, interacts with KDM1A by directly binding to enhancer site of ELF5 and EOMES and activating their transcription leading to self-renewal of trophoblast stem cells. Also regulates expression of multiple rod-specific genes and is required for survival of this cell type. Plays a role as transcription factor activator of GATA6, NR0B1, POU5F1 and PERM1. Plays a role as transcription factor repressor of NFE2L2 transcriptional activity and ESR1 transcriptional activity. During mitosis remains bound to a subset of interphase target genes, including pluripotency regulators, through the canonical ESRRB recognition (ERRE) sequence, leading to their transcriptional activation in early G1 phase. Can coassemble on structured DNA elements with other transcription factors like SOX2, POU5F1, KDM1A and NCOA3 to trigger ESRRB-dependent gene activation. This mechanism, in the case of SOX2 corecruitment prevents the embryonic stem cells (ESCs) to epiblast stem cells (EpiSC) transition through positive regulation of NR0B1 that inhibits the EpiSC transcriptional program. Also plays a role inner ear development by controlling expression of ion channels and transporters and in early placentation. Functionally, transcription factor that binds a canonical ESRRB recognition (ERRE) sequence 5'TCAAGGTCA-3' localized on promoter and enhancer of targets genes regulating their expression or their transcription activity. Positively regulates ESR1 transcriptional activity upon E2 stimulation. This is Steroid hormone receptor ERR2 from Homo sapiens (Human).